The chain runs to 367 residues: MSTQPTKTSSTKLRIFKWLFIISTLVAIAIPITRLLMHLYGKIDEKMYARIFMSYRVNSADSFMINGRYKAIKAKAYPTSEERNKFNSIAQEGDKAVLLKYPYPEHFSLEPEWHYTLCDDVFYNLWKIRVNVCEYYKNNKQEDIAGLVTPPKEAKVDRFFRQDPKISDDDYKKLFTGTDENGKGWSSAAVQFIDILLNLINKPEECKLKDGKLNEKFQKDLESLVSQLGYSTEDMKNIANEIPNFFIQFGKAFPTVIHSTVYSRFYYFFLFLTINGNFDFSEVEKTDGMKIEEFNKQTMKVMASVFAQIFAKVYEESYNYEIKDAGFMDKVRAYFSVSDNIDNVKDQTKNINTVKEVLIKNKELLSK.

An N-terminal signal peptide occupies residues methionine 1 to alanine 29.

In terms of assembly, interacts with SWP7.

It is found in the cytoplasm. It localises to the spore wall. The protein localises to the spore polar tube. Its function is as follows. Involved in adherence of spores to the host cell surface and in infection efficiency. The polypeptide is Spore wall protein 9 (Nosema bombycis (strain CQ1 / CVCC 102059) (Microsporidian parasite)).